The primary structure comprises 348 residues: D-erythrose-4-phosphate dehydrogenase (348 aa).

Residues Arg12–Ile13 and Arg81 each bind NAD(+). Substrate-binding positions include Ser154–Thr156, Arg200, Thr213–Lys214, and Arg236. Residue Cys155 is the Nucleophile of the active site. An NAD(+)-binding site is contributed by Asn318.

The protein belongs to the glyceraldehyde-3-phosphate dehydrogenase family. Epd subfamily. In terms of assembly, homotetramer.

It is found in the cytoplasm. It catalyses the reaction D-erythrose 4-phosphate + NAD(+) + H2O = 4-phospho-D-erythronate + NADH + 2 H(+). Its pathway is cofactor biosynthesis; pyridoxine 5'-phosphate biosynthesis; pyridoxine 5'-phosphate from D-erythrose 4-phosphate: step 1/5. In terms of biological role, catalyzes the NAD-dependent conversion of D-erythrose 4-phosphate to 4-phosphoerythronate. The protein is D-erythrose-4-phosphate dehydrogenase of Salmonella gallinarum (strain 287/91 / NCTC 13346).